The primary structure comprises 177 residues: Large ribosomal subunit protein uL5 (177 aa).

This sequence belongs to the universal ribosomal protein uL5 family. As to quaternary structure, part of the 50S ribosomal subunit; part of the 5S rRNA/L5/L18/L25 subcomplex. Contacts the 5S rRNA and the P site tRNA. Forms a bridge to the 30S subunit in the 70S ribosome.

Functionally, this is one of the proteins that bind and probably mediate the attachment of the 5S RNA into the large ribosomal subunit, where it forms part of the central protuberance. In the 70S ribosome it contacts protein S13 of the 30S subunit (bridge B1b), connecting the 2 subunits; this bridge is implicated in subunit movement. Contacts the P site tRNA; the 5S rRNA and some of its associated proteins might help stabilize positioning of ribosome-bound tRNAs. This chain is Large ribosomal subunit protein uL5, found in Anaplasma phagocytophilum (strain HZ).